Here is an 874-residue protein sequence, read N- to C-terminus: Probable inorganic carbon transporter subunit DabA (874 aa).

Zn(2+) contacts are provided by Cys-398, Asp-400, His-580, and Cys-595.

This sequence belongs to the inorganic carbon transporter (TC 9.A.2) DabA family. Forms a complex with DabB. The cofactor is Zn(2+).

It is found in the cell membrane. In terms of biological role, part of an energy-coupled inorganic carbon pump. The polypeptide is Probable inorganic carbon transporter subunit DabA (Bacillus cereus (strain ATCC 10987 / NRS 248)).